Consider the following 292-residue polypeptide: Nitrogenase iron protein 2 (292 aa).

12-19 (GKGGIGKS) provides a ligand contact to ATP. Residue C97 participates in [4Fe-4S] cluster binding. The residue at position 100 (R100) is an ADP-ribosylarginine; by dinitrogenase reductase ADP-ribosyltransferase. Position 133 (C133) interacts with [4Fe-4S] cluster.

Belongs to the NifH/BchL/ChlL family. In terms of assembly, homodimer. The cofactor is [4Fe-4S] cluster. The reversible ADP-ribosylation of Arg-100 inactivates the nitrogenase reductase and regulates nitrogenase activity.

The enzyme catalyses N2 + 8 reduced [2Fe-2S]-[ferredoxin] + 16 ATP + 16 H2O = H2 + 8 oxidized [2Fe-2S]-[ferredoxin] + 2 NH4(+) + 16 ADP + 16 phosphate + 6 H(+). Its function is as follows. The key enzymatic reactions in nitrogen fixation are catalyzed by the nitrogenase complex, which has 2 components: the iron protein and the molybdenum-iron protein. In Paenibacillus durus (Paenibacillus azotofixans), this protein is Nitrogenase iron protein 2 (nifH2).